We begin with the raw amino-acid sequence, 319 residues long: Cell surface A33 antigen (319 aa).

A signal peptide spans 1–21 (MVGKMWPVLWTLCAVRVTVDA). The 113-residue stretch at 22–134 (ISVETPQDVL…LEGNTKSRVR (113 aa)) folds into the Ig-like V-type domain. The Extracellular portion of the chain corresponds to 22–235 (ISVETPQDVL…VAVRSPSMNV (214 aa)). Cystine bridges form between Cys-43–Cys-117, Cys-146–Cys-222, and Cys-162–Cys-211. Asn-112, Asn-200, and Asn-223 each carry an N-linked (GlcNAc...) asparagine glycan. Residues 140–227 (PPSKPECGIE…GTQFCNITVA (88 aa)) enclose the Ig-like C2-type domain. The chain crosses the membrane as a helical span at residues 236 to 256 (ALYVGIAVGVVAALIIIGIII). Residues 257 to 319 (YCCCCRGKDD…GRESPDHLDQ (63 aa)) lie on the Cytoplasmic side of the membrane. 2 stretches are compositionally biased toward basic and acidic residues: residues 267-295 (NTEDKEDARPNREAYEEPPEQLRELSRER) and 303-319 (QEEQRSTGRESPDHLDQ). A disordered region spans residues 267 to 319 (NTEDKEDARPNREAYEEPPEQLRELSREREEEDDYRQEEQRSTGRESPDHLDQ).

N-glycosylated, contains approximately 8 kDa of N-linked carbohydrate. Post-translationally, palmitoylated. As to expression, expressed in normal gastrointestinal epithelium and in 95% of colon cancers.

The protein localises to the membrane. Functionally, may play a role in cell-cell recognition and signaling. The sequence is that of Cell surface A33 antigen (GPA33) from Homo sapiens (Human).